Here is an 82-residue protein sequence, read N- to C-terminus: Diptericin-A (82 aa).

2 disordered regions span residues 1–32 (DEKP…DGFG) and 45–69 (DNGG…GNSR). The residue at position 82 (phenylalanine 82) is a Phenylalanine amide.

Belongs to the attacin/sarcotoxin-2 family.

It localises to the secreted. In terms of biological role, antimicrobial peptide required to resist Gram-negative bacterial infections, regulated by Dredd. In Protophormia terraenovae (Northern blowfly), this protein is Diptericin-A.